The sequence spans 201 residues: Recombination protein RecR (201 aa).

Residues 60–75 form a C4-type zinc finger; sequence CATCGNFDTVQPCAVC. The Toprim domain maps to 83–178; the sequence is GIICVVEDVP…DVTRLAHGVP (96 aa).

Belongs to the RecR family.

Functionally, may play a role in DNA repair. It seems to be involved in an RecBC-independent recombinational process of DNA repair. It may act with RecF and RecO. This is Recombination protein RecR from Hyphomonas neptunium (strain ATCC 15444).